The primary structure comprises 211 residues: Dual specificity protein phosphatase 26 (211 aa).

The Tyrosine-protein phosphatase domain occupies 60 to 207 (NHADEVWPGL…LLALDRRLRQ (148 aa)). Cys152 (phosphocysteine intermediate) is an active-site residue.

Belongs to the protein-tyrosine phosphatase family. Non-receptor class dual specificity subfamily. Interacts with HSF4. As to expression, brain and skeletal muscle. In the brain it is expressed ubiquitously except in the hippocampus.

The protein localises to the cytoplasm. It localises to the nucleus. The protein resides in the golgi apparatus. It catalyses the reaction O-phospho-L-tyrosyl-[protein] + H2O = L-tyrosyl-[protein] + phosphate. The enzyme catalyses O-phospho-L-seryl-[protein] + H2O = L-seryl-[protein] + phosphate. It carries out the reaction O-phospho-L-threonyl-[protein] + H2O = L-threonyl-[protein] + phosphate. Its function is as follows. Inactivates MAPK1 and MAPK3 which leads to dephosphorylation of heat shock factor protein 4 and a reduction in its DNA-binding activity. This chain is Dual specificity protein phosphatase 26 (Dusp26), found in Mus musculus (Mouse).